The sequence spans 379 residues: Phospho-N-acetylmuramoyl-pentapeptide-transferase (379 aa).

10 helical membrane-spanning segments follow: residues 27 to 47, 76 to 96, 100 to 120, 135 to 155, 185 to 205, 218 to 238, 255 to 275, 283 to 303, 307 to 327, and 356 to 376; these read FRTA…GPAV, TMGG…WADL, FVWI…TDDY, AKMG…VLVQ, PHIW…VLVG, GLAI…TYVS, VGEL…FLWY, FMGD…AVII, LLLP…ILQV, and KIIV…LTTL.

The protein belongs to the glycosyltransferase 4 family. MraY subfamily. Mg(2+) serves as cofactor.

Its subcellular location is the cell inner membrane. The catalysed reaction is UDP-N-acetyl-alpha-D-muramoyl-L-alanyl-gamma-D-glutamyl-meso-2,6-diaminopimeloyl-D-alanyl-D-alanine + di-trans,octa-cis-undecaprenyl phosphate = di-trans,octa-cis-undecaprenyl diphospho-N-acetyl-alpha-D-muramoyl-L-alanyl-D-glutamyl-meso-2,6-diaminopimeloyl-D-alanyl-D-alanine + UMP. The protein operates within cell wall biogenesis; peptidoglycan biosynthesis. Catalyzes the initial step of the lipid cycle reactions in the biosynthesis of the cell wall peptidoglycan: transfers peptidoglycan precursor phospho-MurNAc-pentapeptide from UDP-MurNAc-pentapeptide onto the lipid carrier undecaprenyl phosphate, yielding undecaprenyl-pyrophosphoryl-MurNAc-pentapeptide, known as lipid I. This chain is Phospho-N-acetylmuramoyl-pentapeptide-transferase, found in Koribacter versatilis (strain Ellin345).